The following is a 100-amino-acid chain: uncharacterized protein (100 aa).

A run of 2 helical transmembrane segments spans residues 50 to 70 (LLIF…FSLF) and 75 to 95 (DVFL…SPEV).

Its subcellular location is the membrane. This is an uncharacterized protein from Saccharomyces cerevisiae (strain ATCC 204508 / S288c) (Baker's yeast).